Consider the following 257-residue polypeptide: uncharacterized protein (257 aa).

ATP is bound at residue Gly7–Thr14.

It to M.jannaschii MJ0084 and MJ0685.

This is an uncharacterized protein from Methanocaldococcus jannaschii (strain ATCC 43067 / DSM 2661 / JAL-1 / JCM 10045 / NBRC 100440) (Methanococcus jannaschii).